The sequence spans 85 residues: Large ribosomal subunit protein uL23 (85 aa).

It belongs to the universal ribosomal protein uL23 family. In terms of assembly, part of the 50S ribosomal subunit. Interacts with protein L29 and weakly with protein L39e.

Binds to a specific region on the 23S rRNA. Located at the polypeptide exit tunnel on the outside of the subunit. The sequence is that of Large ribosomal subunit protein uL23 from Haloarcula marismortui (strain ATCC 43049 / DSM 3752 / JCM 8966 / VKM B-1809) (Halobacterium marismortui).